Here is a 662-residue protein sequence, read N- to C-terminus: UvrABC system protein B (662 aa).

The Helicase ATP-binding domain maps to 25–182 (KGIEKGEKFQ…KKLVEIQYER (158 aa)). 38–45 (GVTGSGKT) serves as a coordination point for ATP. The Beta-hairpin signature appears at 91 to 114 (YYDYYQPEAYVAQSDTYIEKDASI). The Helicase C-terminal domain occupies 429 to 595 (QIDDLYTSIQ…TIIKDIREVI (167 aa)). The region spanning 622–657 (DKLIEKYEEEMKEAAQNLQFEKAAHLRDVIYKLKRD) is the UVR domain.

This sequence belongs to the UvrB family. As to quaternary structure, forms a heterotetramer with UvrA during the search for lesions. Interacts with UvrC in an incision complex.

Its subcellular location is the cytoplasm. Functionally, the UvrABC repair system catalyzes the recognition and processing of DNA lesions. A damage recognition complex composed of 2 UvrA and 2 UvrB subunits scans DNA for abnormalities. Upon binding of the UvrA(2)B(2) complex to a putative damaged site, the DNA wraps around one UvrB monomer. DNA wrap is dependent on ATP binding by UvrB and probably causes local melting of the DNA helix, facilitating insertion of UvrB beta-hairpin between the DNA strands. Then UvrB probes one DNA strand for the presence of a lesion. If a lesion is found the UvrA subunits dissociate and the UvrB-DNA preincision complex is formed. This complex is subsequently bound by UvrC and the second UvrB is released. If no lesion is found, the DNA wraps around the other UvrB subunit that will check the other stand for damage. The protein is UvrABC system protein B of Clostridium botulinum (strain Loch Maree / Type A3).